The following is a 369-amino-acid chain: Deacetylase EF_0837 (369 aa).

His58, His60, Lys152, His186, His209, and Asp270 together coordinate Zn(2+). The residue at position 152 (Lys152) is an N6-carboxylysine.

This sequence belongs to the metallo-dependent hydrolases superfamily. Atu3266/EF_0837 deacetylase family. The cofactor is Zn(2+).

Functionally, esterase that can catalyze the deacetylation of acetyl-(R)-mandelate, but with very low efficiency (in vitro). In Enterococcus faecalis (strain ATCC 700802 / V583), this protein is Deacetylase EF_0837.